Consider the following 131-residue polypeptide: Aspartate 1-decarboxylase (131 aa).

Residue S25 is the Schiff-base intermediate with substrate; via pyruvic acid of the active site. S25 is modified (pyruvic acid (Ser)). T57 lines the substrate pocket. Y58 functions as the Proton donor in the catalytic mechanism. Residue G73–A75 participates in substrate binding.

It belongs to the PanD family. As to quaternary structure, heterooctamer of four alpha and four beta subunits. Pyruvate serves as cofactor. Is synthesized initially as an inactive proenzyme, which is activated by self-cleavage at a specific serine bond to produce a beta-subunit with a hydroxyl group at its C-terminus and an alpha-subunit with a pyruvoyl group at its N-terminus.

Its subcellular location is the cytoplasm. The catalysed reaction is L-aspartate + H(+) = beta-alanine + CO2. The protein operates within cofactor biosynthesis; (R)-pantothenate biosynthesis; beta-alanine from L-aspartate: step 1/1. Its function is as follows. Catalyzes the pyruvoyl-dependent decarboxylation of aspartate to produce beta-alanine. This chain is Aspartate 1-decarboxylase, found in Anaeromyxobacter sp. (strain Fw109-5).